The following is a 200-amino-acid chain: Potassium-transporting ATPase KdpC subunit (200 aa).

The chain crosses the membrane as a helical span at residues 9-31; sequence LVMLVALTALTGLVYPLAMTGVA. The segment at 68–97 is disordered; that stretch reads GRPSATTAPDPQDSSKTVPSPYNAANSMGA. A compositionally biased stretch (polar residues) spans 71–96; the sequence is SATTAPDPQDSSKTVPSPYNAANSMG.

Belongs to the KdpC family. In terms of assembly, the system is composed of three essential subunits: KdpA, KdpB and KdpC.

It localises to the cell inner membrane. Functionally, part of the high-affinity ATP-driven potassium transport (or Kdp) system, which catalyzes the hydrolysis of ATP coupled with the electrogenic transport of potassium into the cytoplasm. This subunit acts as a catalytic chaperone that increases the ATP-binding affinity of the ATP-hydrolyzing subunit KdpB by the formation of a transient KdpB/KdpC/ATP ternary complex. This is Potassium-transporting ATPase KdpC subunit from Rhodopseudomonas palustris (strain BisA53).